Reading from the N-terminus, the 306-residue chain is CRISPR-associated endonuclease Cas1 (306 aa).

Mn(2+) contacts are provided by E143, H210, and D223.

This sequence belongs to the CRISPR-associated endonuclease Cas1 family. Homodimer, forms a heterotetramer with a Cas2 homodimer. Mg(2+) serves as cofactor. Requires Mn(2+) as cofactor.

In terms of biological role, CRISPR (clustered regularly interspaced short palindromic repeat), is an adaptive immune system that provides protection against mobile genetic elements (viruses, transposable elements and conjugative plasmids). CRISPR clusters contain spacers, sequences complementary to antecedent mobile elements, and target invading nucleic acids. CRISPR clusters are transcribed and processed into CRISPR RNA (crRNA). Acts as a dsDNA endonuclease. Involved in the integration of spacer DNA into the CRISPR cassette. The sequence is that of CRISPR-associated endonuclease Cas1 from Geobacter sulfurreducens (strain ATCC 51573 / DSM 12127 / PCA).